The following is a 327-amino-acid chain: Thiamine-binding periplasmic protein (327 aa).

Positions 1–18 (MLKKCLPLLLLCTAPVFA) are cleaved as a signal peptide. Thiamine is bound by residues 59–60 (DG), 161–162 (ST), W197, and 215–218 (YTTS).

It belongs to the bacterial solute-binding protein 1 family. Monomer in solution. The complex is composed of two ATP-binding proteins (ThiQ), two transmembrane proteins (ThiP) and a solute-binding protein (ThiB).

The protein resides in the periplasm. Transport is inhibited by the sulfhydryl-specific modifier N-ethylmaleimide. In terms of biological role, part of the ABC transporter complex ThiBPQ involved in thiamine import. Binds thiamine, thiamine phosphate and thiamine diphosphate with high affinity. The polypeptide is Thiamine-binding periplasmic protein (thiB) (Escherichia coli (strain K12)).